The sequence spans 250 residues: Probable transcriptional regulatory protein SYNPCC7002_A1640 (250 aa).

This sequence belongs to the TACO1 family.

It localises to the cytoplasm. The chain is Probable transcriptional regulatory protein SYNPCC7002_A1640 from Picosynechococcus sp. (strain ATCC 27264 / PCC 7002 / PR-6) (Agmenellum quadruplicatum).